The sequence spans 173 residues: Photosystem I assembly protein Ycf3 (173 aa).

TPR repeat units lie at residues 35–68 (AFAY…EEDP), 72–105 (SYIL…NPRM), and 113–146 (AVIY…WKRA).

It belongs to the Ycf3 family.

The protein localises to the cellular thylakoid membrane. Essential for the assembly of the photosystem I (PSI) complex. May act as a chaperone-like factor to guide the assembly of the PSI subunits. In Thermosynechococcus vestitus (strain NIES-2133 / IAM M-273 / BP-1), this protein is Photosystem I assembly protein Ycf3.